Here is a 265-residue protein sequence, read N- to C-terminus: Interleukin-1 alpha (265 aa).

A propeptide spanning residues 1–108 (MAKVPDLFED…DTEEVIMKPR (108 aa)) is cleaved from the precursor. Lys-78 bears the N6-acetyllysine mark. The nuclear localization signal (NLS) stretch occupies residues 78-82 (KKRRL). Ser-83 carries the phosphoserine modification. 2 N-linked (GlcNAc...) asparagine glycosylation sites follow: Asn-98 and Asn-137.

This sequence belongs to the IL-1 family. In terms of assembly, monomer. Interacts with TMED10; the interaction mediates the translocation from the cytoplasm into the ERGIC (endoplasmic reticulum-Golgi intermediate compartment) and thereby secretion. Interacts with IL1R1. Interacts with S100A13; this interaction is the first step in the export of IL1A, followed by direct translocation of this complex across the plasma membrane. Acetylated within its nuclear localization sequence, which impacts subcellular localization. In terms of processing, proteolytic processed by CAPN1 in a calcium-dependent manner. Cleavage from 31 kDa precursor to 18 kDa biologically active molecules. Post-translationally, phosphorylated. Phosphorylation greatly enhances susceptibility to digestion and promotes the conversion of pre-IL1A alpha to the biologically active IL1A.

The protein resides in the nucleus. Its subcellular location is the cytoplasm. The protein localises to the secreted. Functionally, cytokine constitutively present intracellularly in nearly all resting non-hematopoietic cells that plays an important role in inflammation and bridges the innate and adaptive immune systems. After binding to its receptor IL1R1 together with its accessory protein IL1RAP, forms the high affinity interleukin-1 receptor complex. Signaling involves the recruitment of adapter molecules such as MYD88, IRAK1 or IRAK4. In turn, mediates the activation of NF-kappa-B and the three MAPK pathways p38, p42/p44 and JNK pathways. Within the cell, acts as an alarmin and cell death results in its liberation in the extracellular space after disruption of the cell membrane to induce inflammation and alert the host to injury or damage. In addition to its role as a danger signal, which occurs when the cytokine is passively released by cell necrosis, directly senses DNA damage and acts as signal for genotoxic stress without loss of cell integrity. The polypeptide is Interleukin-1 alpha (IL1A) (Canis lupus familiaris (Dog)).